The following is a 146-amino-acid chain: MLDILEIRKYLPHRYPFLMIDRVVELIEGESITAYKNVSINEEIFQGHFPHFPVFPGVLLIEAMAQACGVLGFKTANKTPEDGSIYLFAGIDGVRFKRQVVPGDRVYFECKVVSAKRGIWKFDCVAKVDGELVTSATIMCADRVVG.

Residue histidine 48 is part of the active site.

The protein belongs to the thioester dehydratase family. FabZ subfamily.

It localises to the cytoplasm. It catalyses the reaction a (3R)-hydroxyacyl-[ACP] = a (2E)-enoyl-[ACP] + H2O. Its function is as follows. Involved in unsaturated fatty acids biosynthesis. Catalyzes the dehydration of short chain beta-hydroxyacyl-ACPs and long chain saturated and unsaturated beta-hydroxyacyl-ACPs. This is 3-hydroxyacyl-[acyl-carrier-protein] dehydratase FabZ from Teredinibacter turnerae (strain ATCC 39867 / T7901).